Consider the following 281-residue polypeptide: Bifunctional protein FolD (281 aa).

NADP(+) contacts are provided by residues 164–166 (GRS), serine 189, and isoleucine 230.

The protein belongs to the tetrahydrofolate dehydrogenase/cyclohydrolase family. Homodimer.

The enzyme catalyses (6R)-5,10-methylene-5,6,7,8-tetrahydrofolate + NADP(+) = (6R)-5,10-methenyltetrahydrofolate + NADPH. It carries out the reaction (6R)-5,10-methenyltetrahydrofolate + H2O = (6R)-10-formyltetrahydrofolate + H(+). The protein operates within one-carbon metabolism; tetrahydrofolate interconversion. Its function is as follows. Catalyzes the oxidation of 5,10-methylenetetrahydrofolate to 5,10-methenyltetrahydrofolate and then the hydrolysis of 5,10-methenyltetrahydrofolate to 10-formyltetrahydrofolate. The sequence is that of Bifunctional protein FolD from Pelagibacter ubique (strain HTCC1062).